Consider the following 248-residue polypeptide: Ubiquinone/menaquinone biosynthesis C-methyltransferase UbiE (248 aa).

Positions 68 and 92 each coordinate S-adenosyl-L-methionine.

It belongs to the class I-like SAM-binding methyltransferase superfamily. MenG/UbiE family.

It catalyses the reaction a 2-demethylmenaquinol + S-adenosyl-L-methionine = a menaquinol + S-adenosyl-L-homocysteine + H(+). The catalysed reaction is a 2-methoxy-6-(all-trans-polyprenyl)benzene-1,4-diol + S-adenosyl-L-methionine = a 5-methoxy-2-methyl-3-(all-trans-polyprenyl)benzene-1,4-diol + S-adenosyl-L-homocysteine + H(+). Its pathway is quinol/quinone metabolism; menaquinone biosynthesis; menaquinol from 1,4-dihydroxy-2-naphthoate: step 2/2. It participates in cofactor biosynthesis; ubiquinone biosynthesis. Functionally, methyltransferase required for the conversion of demethylmenaquinol (DMKH2) to menaquinol (MKH2) and the conversion of 2-polyprenyl-6-methoxy-1,4-benzoquinol (DDMQH2) to 2-polyprenyl-3-methyl-6-methoxy-1,4-benzoquinol (DMQH2). This chain is Ubiquinone/menaquinone biosynthesis C-methyltransferase UbiE, found in Rickettsia rickettsii (strain Iowa).